The primary structure comprises 317 residues: Methionyl-tRNA formyltransferase (317 aa).

112–115 (SLLP) is a binding site for (6S)-5,6,7,8-tetrahydrofolate.

Belongs to the Fmt family.

It carries out the reaction L-methionyl-tRNA(fMet) + (6R)-10-formyltetrahydrofolate = N-formyl-L-methionyl-tRNA(fMet) + (6S)-5,6,7,8-tetrahydrofolate + H(+). In terms of biological role, attaches a formyl group to the free amino group of methionyl-tRNA(fMet). The formyl group appears to play a dual role in the initiator identity of N-formylmethionyl-tRNA by promoting its recognition by IF2 and preventing the misappropriation of this tRNA by the elongation apparatus. The protein is Methionyl-tRNA formyltransferase of Mycoplasma capricolum subsp. capricolum (strain California kid / ATCC 27343 / NCTC 10154).